We begin with the raw amino-acid sequence, 295 residues long: Acetylglutamate kinase (295 aa).

Residues 64 to 65 (GG), arginine 86, and asparagine 190 contribute to the substrate site.

The protein belongs to the acetylglutamate kinase family. ArgB subfamily.

The protein localises to the cytoplasm. It catalyses the reaction N-acetyl-L-glutamate + ATP = N-acetyl-L-glutamyl 5-phosphate + ADP. It functions in the pathway amino-acid biosynthesis; L-arginine biosynthesis; N(2)-acetyl-L-ornithine from L-glutamate: step 2/4. Its function is as follows. Catalyzes the ATP-dependent phosphorylation of N-acetyl-L-glutamate. In Heliobacterium modesticaldum (strain ATCC 51547 / Ice1), this protein is Acetylglutamate kinase.